A 303-amino-acid chain; its full sequence is MWFKNLTVYRFNKPFSVDTEALEKSLEDFTFSPCSSQDISKFGFSNALGKQGQTLVHSASERHLICATKEEKILPSQVIKEALEDKVAQIEAEEDRKLAKKEKDAMKEEIVMTLLPRAFTRRSQIRALIIPEIEMILVDSSSAAKSEELLALLRKALGSLPIIPLSFKTPIETQLTEWLKGNSTPAPFIMQDEAELKTDSDEGGIVRFKQQDLTEDEVLAHIEVGKQVHKLALYFGQSIAFLLQSDAGIKRLKFSEEFRAGNDEVGTEDPMARLDADFALMGSELIALMNSLVEVLGGVEDSI.

Belongs to the RdgC family.

The protein resides in the cytoplasm. The protein localises to the nucleoid. May be involved in recombination. The chain is Recombination-associated protein RdgC from Shewanella sediminis (strain HAW-EB3).